The chain runs to 801 residues: Ribosome biogenesis protein ERB1 (801 aa).

Disordered stretches follow at residues 1 to 135 (MGSK…LEDR) and 358 to 377 (PEYLPTKEEREEWEKMDPED). Acidic residues predominate over residues 35-90 (SEDEEDYIPSSEVDEDDDDDADESASEDSDDSNDSEDDEVEEDDEALLSDEIPSEG). 3 stretches are compositionally biased toward basic and acidic residues: residues 91-113 (ESEKDQDLAESKESKQDQDKEPS), 124-135 (PPRKEDEELEDR), and 362-377 (PTKEEREEWEKMDPED). WD repeat units follow at residues 451 to 490 (GHEGRVRSVAIDPTGVALATGGDDGTVRVWELLTGRQVWS) and 494 to 534 (NGDE…VTPA). Residues 546-570 (GFGHATNGKQQANLPPGKEPPGKWA) form a disordered region. 5 WD repeats span residues 586–628 (TVRS…TQIP), 631–669 (KLNGLAQTASFHPLRPLFFVATQRSIRCYDLQKLELVKI), 672–711 (PGAKWISSFDVHPGGDNLVVGSYDKRLLWHDLDLSNRPYK), 715–755 (FHTE…DQLE), and 771–801 (VNKLGVLDIDWHPREPWCVSAGADGTARLWM).

It belongs to the WD repeat BOP1/ERB1 family. Component of the NOP7 complex, composed of ERB1, NOP7 and YTM1. The complex is held together by ERB1, which interacts with NOP7 via its N-terminal domain and with YTM1 via a high-affinity interaction between the seven-bladed beta-propeller domains of the 2 proteins. The NOP7 complex associates with the 66S pre-ribosome.

The protein localises to the nucleus. Its subcellular location is the nucleolus. It is found in the nucleoplasm. Component of the NOP7 complex, which is required for maturation of the 25S and 5.8S ribosomal RNAs and formation of the 60S ribosome. This is Ribosome biogenesis protein ERB1 from Chaetomium thermophilum (strain DSM 1495 / CBS 144.50 / IMI 039719) (Thermochaetoides thermophila).